The chain runs to 341 residues: tRNA N6-adenosine threonylcarbamoyltransferase (341 aa).

Positions 111 and 115 each coordinate Fe cation. Residues 133–137 (AVSGG), Asp166, Gly179, Asp183, and Asn273 each bind substrate. Asp301 provides a ligand contact to Fe cation.

This sequence belongs to the KAE1 / TsaD family. Fe(2+) is required as a cofactor.

Its subcellular location is the cytoplasm. It catalyses the reaction L-threonylcarbamoyladenylate + adenosine(37) in tRNA = N(6)-L-threonylcarbamoyladenosine(37) in tRNA + AMP + H(+). Its function is as follows. Required for the formation of a threonylcarbamoyl group on adenosine at position 37 (t(6)A37) in tRNAs that read codons beginning with adenine. Is involved in the transfer of the threonylcarbamoyl moiety of threonylcarbamoyl-AMP (TC-AMP) to the N6 group of A37, together with TsaE and TsaB. TsaD likely plays a direct catalytic role in this reaction. This chain is tRNA N6-adenosine threonylcarbamoyltransferase, found in Geotalea daltonii (strain DSM 22248 / JCM 15807 / FRC-32) (Geobacter daltonii).